Reading from the N-terminus, the 142-residue chain is Hemoglobin subunit alpha (142 aa).

The region spanning 2-142 is the Globin domain; the sequence is VLSPADKTNV…VSTVLTSKYR (141 aa). At S4 the chain carries Phosphoserine. Position 8 is an N6-succinyllysine (K8). The residue at position 9 (T9) is a Phosphothreonine. At K12 the chain carries N6-succinyllysine. K17 carries the post-translational modification N6-acetyllysine; alternate. K17 is subject to N6-succinyllysine; alternate. At Y25 the chain carries Phosphotyrosine. S36 bears the Phosphoserine mark. K41 is subject to N6-succinyllysine. The residue at position 50 (S50) is a Phosphoserine. H59 lines the O2 pocket. H88 is a heme b binding site. Position 103 is a phosphoserine (S103). Phosphothreonine is present on T109. Residues S125 and S132 each carry the phosphoserine modification. Residues T135 and T138 each carry the phosphothreonine modification. S139 carries the post-translational modification Phosphoserine.

The protein belongs to the globin family. In terms of assembly, heterotetramer of two alpha chains and two beta chains. As to expression, red blood cells.

Functionally, involved in oxygen transport from the lung to the various peripheral tissues. Hemopressin acts as an antagonist peptide of the cannabinoid receptor CNR1. Hemopressin-binding efficiently blocks cannabinoid receptor CNR1 and subsequent signaling. This chain is Hemoglobin subunit alpha (HBA), found in Sapajus apella (Brown-capped capuchin).